Consider the following 501-residue polypeptide: Myrosinase MA1 (501 aa).

Intrachain disulfides connect cysteine 6–cysteine 438, cysteine 14–cysteine 434, and cysteine 206–cysteine 214. An N-linked (GlcNAc...) asparagine glycan is attached at asparagine 21. Glutamine 39 lines the substrate pocket. Histidine 56 contributes to the Zn(2+) binding site. N-linked (GlcNAc...) asparagine glycosylation occurs at asparagine 60. Residue aspartate 70 participates in Zn(2+) binding. Residue asparagine 90 is glycosylated (N-linked (GlcNAc...) asparagine). 2 residues coordinate substrate: histidine 141 and asparagine 186. L-ascorbate is bound at residue glutamine 187. N-linked (GlcNAc...) asparagine glycosylation is found at asparagine 218 and asparagine 244. Arginine 259 lines the L-ascorbate pocket. 2 N-linked (GlcNAc...) asparagine glycosylation sites follow: asparagine 265 and asparagine 292. Tyrosine 330 serves as a coordination point for substrate. Asparagine 343, asparagine 346, and asparagine 361 each carry an N-linked (GlcNAc...) asparagine glycan. Glutamate 409 functions as the Nucleophile in the catalytic mechanism. Substrate is bound by residues tryptophan 457 and 464-465 (EF). The N-linked (GlcNAc...) asparagine glycan is linked to asparagine 482.

Belongs to the glycosyl hydrolase 1 family. Homodimer. As to expression, in vacuoles called myrosin grains of a certain class of cells, myrosin cells, distributed in the cotyledons and the axis of the embryo as well as in different organs of the growing plant.

The protein localises to the vacuole. It carries out the reaction a thioglucoside + H2O = a sugar + a thiol.. In terms of biological role, degradation of glucosinolates (glucose residue linked by a thioglucoside bound to an amino acid derivative) to glucose, sulfate and any of the products: thiocyanates, isothiocyanates, nitriles, epithionitriles or oxazolidine-2-thiones. In Sinapis alba (White mustard), this protein is Myrosinase MA1.